The chain runs to 995 residues: Endo-beta-N-acetylglucosaminidase EndoS (995 aa).

Residues 1-36 (MDKHLLVKRTLGCVCAATLMGAALATHHDSLNTVKA) form the signal peptide. Residues 112–432 (SLYGGYFRTW…KDATDNIFHS (321 aa)) enclose the GH18 domain. His151, Trp153, and Arg186 together coordinate a glycoprotein. Catalysis depends on Glu235, which acts as the Proton donor. A glycoprotein contacts are provided by Asp237, Gln303, Tyr305, Glu349, Glu350, Asn356, and Tyr402. LRR repeat units lie at residues 437-460 (SKAL…DFPD), 478-503 (LERF…KFKK), 562-585 (LTGL…DAAT), and 586-609 (LTSL…ENRQ). The interval 765–923 (MVNLAEGATV…VPELQILGYP (159 aa)) is carbohydrate-binding module (CBM). Ca(2+)-binding residues include Lys786, Asp789, Gln791, Pro915, and Glu916. A three-helix bundle (3H) region spans residues 924–995 (LPNADTIMKT…CIEKRQLLKK (72 aa)).

This sequence belongs to the glycosyl hydrolase 18 family. Cleaved by SpeB protease; leading to loss of endoglucosidase activity. EndoS is produced and secreted prior to SpeB, suggesting that it is degraded after acting as a host immune evasion factor.

The protein resides in the secreted. It localises to the host extracellular space. It carries out the reaction an N(4)-(oligosaccharide-(1-&gt;3)-[oligosaccharide-(1-&gt;6)]-beta-D-Man-(1-&gt;4)-beta-D-GlcNAc-(1-&gt;4)-alpha-D-GlcNAc)-L-asparaginyl-[protein] + H2O = an oligosaccharide-(1-&gt;3)-[oligosaccharide-(1-&gt;6)]-beta-D-Man-(1-&gt;4)-D-GlcNAc + N(4)-(N-acetyl-beta-D-glucosaminyl)-L-asparaginyl-[protein]. Endoglucosidase that acts as a host immune evasion factor by mediating hydrolysis of the N-linked glycan from the Fc region of host immunoglobulin-gamma (IgG) during infection. Specifically catalyzes the hydrolysis of the beta-1,4 linkage between the first two N-acetylglucosamine residues of the complex-type N-linked glycan located on 'Asn-297' of the Fc region of IgG antibodies (IGHG1, IGHG2, IGHG3 or IGHG4), thereby preventing interaction between IgGs and Fc receptors and ability to activate the complement pathway. Shows a specificity for biantennary complex type N-glycans; does neither cleave larger complex type glycans nor oligomannose and nor hybrid-type glycans. Specifically acts on IgGs; does not act on immunoglobulin alpha, beta, delta or mu. The polypeptide is Endo-beta-N-acetylglucosaminidase EndoS (Streptococcus pyogenes serotype M1).